The chain runs to 119 residues: Inner membrane protein YijD (119 aa).

The Cytoplasmic segment spans residues 1–8; it reads MKQANQDR. Residues 9–28 form a helical membrane-spanning segment; that stretch reads GTLLLALVAGLSINGTFAAL. The Periplasmic portion of the chain corresponds to 29–31; sequence FSS. Residues 32–50 traverse the membrane as a helical segment; that stretch reads IVPFSVFPIISLVLTVYCL. The Cytoplasmic portion of the chain corresponds to 51-61; sequence HQRYLNRTMPV. The helical transmembrane segment at 62–84 threads the bilayer; it reads GLPGLAAACFILGVLLYSTVVRA. The Periplasmic segment spans residues 85–88; the sequence is EYPD. Residues 89-108 traverse the membrane as a helical segment; sequence IGSNFFPAVLSVIMVFWIGA. The Cytoplasmic portion of the chain corresponds to 109–119; the sequence is KMRNRKQEVAE.

The protein localises to the cell inner membrane. The polypeptide is Inner membrane protein YijD (yijD) (Escherichia coli O6:H1 (strain CFT073 / ATCC 700928 / UPEC)).